A 103-amino-acid chain; its full sequence is Large ribosomal subunit protein mL41 (103 aa).

Belongs to the mitochondrion-specific ribosomal protein mL41 family. Component of the mitochondrial large ribosomal subunit (mt-LSU). Mature N.crassa 74S mitochondrial ribosomes consist of a small (37S) and a large (54S) subunit. The 37S small subunit contains a 16S ribosomal RNA (16S mt-rRNA) and 32 different proteins. The 54S large subunit contains a 23S rRNA (23S mt-rRNA) and 42 different proteins.

The protein resides in the mitochondrion. Its function is as follows. Component of the mitochondrial ribosome (mitoribosome), a dedicated translation machinery responsible for the synthesis of mitochondrial genome-encoded proteins, including at least some of the essential transmembrane subunits of the mitochondrial respiratory chain. The mitoribosomes are attached to the mitochondrial inner membrane and translation products are cotranslationally integrated into the membrane. In Neurospora crassa (strain ATCC 24698 / 74-OR23-1A / CBS 708.71 / DSM 1257 / FGSC 987), this protein is Large ribosomal subunit protein mL41 (mrpl27).